The following is a 208-amino-acid chain: MNRKQIAKGKLVRRFGINIFEQPKYDKILKKKPHPPGMHGKARKAKITEYGKQLIEKQKIKFTYGVSERQLTNTFKEAKKHHGVTGDNLLSILERRIDNIVYRAGFAISRAHARQIVSHGIIILNGRRVTIPSIILRANDQIQIKEKDSLKKLIRSNIEKTSSLRNLPTWIEVNADDLNIKVKHAPSRDEIPTLANEQMVVEYYSKRA.

Positions 95-157 constitute an S4 RNA-binding domain; the sequence is RRIDNIVYRA…DSLKKLIRSN (63 aa).

The protein belongs to the universal ribosomal protein uS4 family. In terms of assembly, part of the 30S ribosomal subunit. Contacts protein S5. The interaction surface between S4 and S5 is involved in control of translational fidelity.

Its function is as follows. One of the primary rRNA binding proteins, it binds directly to 16S rRNA where it nucleates assembly of the body of the 30S subunit. With S5 and S12 plays an important role in translational accuracy. This Borrelia garinii subsp. bavariensis (strain ATCC BAA-2496 / DSM 23469 / PBi) (Borreliella bavariensis) protein is Small ribosomal subunit protein uS4.